The chain runs to 206 residues: FMN-dependent NADH:quinone oxidoreductase (206 aa).

FMN is bound by residues S9, 15–17 (SVS), and 139–142 (SRGG).

This sequence belongs to the azoreductase type 1 family. As to quaternary structure, homodimer. FMN is required as a cofactor.

The catalysed reaction is 2 a quinone + NADH + H(+) = 2 a 1,4-benzosemiquinone + NAD(+). It catalyses the reaction N,N-dimethyl-1,4-phenylenediamine + anthranilate + 2 NAD(+) = 2-(4-dimethylaminophenyl)diazenylbenzoate + 2 NADH + 2 H(+). In terms of biological role, quinone reductase that provides resistance to thiol-specific stress caused by electrophilic quinones. Also exhibits azoreductase activity. Catalyzes the reductive cleavage of the azo bond in aromatic azo compounds to the corresponding amines. The polypeptide is FMN-dependent NADH:quinone oxidoreductase (Cupriavidus necator (strain ATCC 17699 / DSM 428 / KCTC 22496 / NCIMB 10442 / H16 / Stanier 337) (Ralstonia eutropha)).